A 783-amino-acid polypeptide reads, in one-letter code: Probable alpha,alpha-trehalose-phosphate synthase [UDP-forming] 3 (783 aa).

The tract at residues 11 to 456 is glycosyltransferase; the sequence is QTLLVVANRL…GFDFLSELND (446 aa).

The protein in the N-terminal section; belongs to the glycosyltransferase 20 family. This sequence in the C-terminal section; belongs to the trehalose phosphatase family.

The catalysed reaction is D-glucose 6-phosphate + UDP-alpha-D-glucose = alpha,alpha-trehalose 6-phosphate + UDP + H(+). This Arabidopsis thaliana (Mouse-ear cress) protein is Probable alpha,alpha-trehalose-phosphate synthase [UDP-forming] 3 (TPS3).